The sequence spans 862 residues: Leucine--tRNA ligase (862 aa).

The 'HIGH' region signature appears at 51–61; that stretch reads PYPSGSLHMGH. A 'KMSKS' region motif is present at residues 624 to 628; it reads KMSKS. Lys627 serves as a coordination point for ATP.

The protein belongs to the class-I aminoacyl-tRNA synthetase family.

Its subcellular location is the cytoplasm. The enzyme catalyses tRNA(Leu) + L-leucine + ATP = L-leucyl-tRNA(Leu) + AMP + diphosphate. This chain is Leucine--tRNA ligase, found in Prochlorococcus marinus (strain NATL1A).